Here is a 263-residue protein sequence, read N- to C-terminus: MSYYIPPKVWSAEESNQGKFSAINRPTAGSRFDQKLPQGDKPLQVYSLGTPNGLKVAVMLEELRELGVKEADYDLFKISIMDGDQFGSDFVAINPNSKIPSLLDKSNREAIRVFESGSILLYLADKFNHLIPVDWAQRTEVLNWLFWQMGAAPFVGGGFGHFFSYAPEKLEYPINRFTMETKRQLDLLNKELANKPYIAGEDYTIADIAIWSWYGRLAQDALYEGAYKFLALGTYQHLLDWTERIAQRPAVKRALEVDYKAIK.

Residues 44–131 (QVYSLGTPNG…YLADKFNHLI (88 aa)) form the GST N-terminal domain. The 130-residue stretch at 134-263 (DWAQRTEVLN…ALEVDYKAIK (130 aa)) folds into the GST C-terminal domain.

Belongs to the GST superfamily. In terms of assembly, homodimer.

This is an uncharacterized protein from Streptococcus mutans serotype c (strain ATCC 700610 / UA159).